The chain runs to 135 residues: Histone H3 type 1 (135 aa).

The tract at residues 1-40 (MARTKQTARKSTGGKAPRKQLATKAARKTPATGGVKKPHR) is disordered. Lys5 bears the N6-methyllysine mark. An N6-acetyllysine; alternate modification is found at Lys10. Lys10 carries the N6-methyllysine; alternate modification. Phosphoserine is present on Ser11. Thr12 is modified (phosphothreonine). N6-acetyllysine is present on residues Lys15, Lys19, and Lys24. Lys28 carries the post-translational modification N6-acetyllysine; alternate. Lys28 bears the N6-methyllysine; alternate mark. An N6-methyllysine mark is found at Lys36 and Lys37.

This sequence belongs to the histone H3 family. The nucleosome is a histone octamer containing two molecules each of H2A, H2B, H3 and H4 assembled in one H3-H4 heterotetramer and two H2A-H2B heterodimers. The octamer wraps approximately 147 bp of DNA. In terms of processing, acetylation is generally linked to gene activation. Acetylated to form H3K9ac (11%), H3K14ac (17%), H3K18ac (11%), H3K23ac (16%) and H3K27ac (7%). H3K4, H3K35 and H3K36 are not acetylated. H3K4me prevents acetylation. 32% of the histone H3 are acetylated with, on average, 2.4 acetyl-Lys. They are all continuously deacatylated and re-acetylated with a half-life of approximately 2 minutes. Post-translationally, monomethylated to form H3K4me1 (81%), H3K9me1 (16%), H3K27me1 (25%), H3K35me1 (25%) and H3K36me1 (5%). No methylation at H3K14, H3K18 and H3K23. Methylated by a protein complex that includes Mut11. Set1 methylates specifically H3K4. H3K4me1 is associated with silenced euchromatin. Set3 forms H3K9me1, while H3K9me2 is undetected. H3K9me1 is specifically associated with silent, multi-copy transgenes. No phosphorylation detected.

It is found in the nucleus. Its subcellular location is the chromosome. Core component of nucleosome. Nucleosomes wrap and compact DNA into chromatin, limiting DNA accessibility to the cellular machineries which require DNA as a template. Histones thereby play a central role in transcription regulation, DNA repair, DNA replication and chromosomal stability. DNA accessibility is regulated via a complex set of post-translational modifications of histones, also called histone code, and nucleosome remodeling. This is Histone H3 type 1 (ch3-I) from Chlamydomonas reinhardtii (Chlamydomonas smithii).